Reading from the N-terminus, the 202-residue chain is Small ribosomal subunit protein uS4 (202 aa).

Residues Glu17 to Arg42 form a disordered region. An S4 RNA-binding domain is found at Met90–His152.

It belongs to the universal ribosomal protein uS4 family. As to quaternary structure, part of the 30S ribosomal subunit. Contacts protein S5. The interaction surface between S4 and S5 is involved in control of translational fidelity.

One of the primary rRNA binding proteins, it binds directly to 16S rRNA where it nucleates assembly of the body of the 30S subunit. In terms of biological role, with S5 and S12 plays an important role in translational accuracy. This is Small ribosomal subunit protein uS4 from Acaryochloris marina (strain MBIC 11017).